The sequence spans 4830 residues: Siderophore peptide synthetase fer3 (4830 aa).

Residues 197-623 are adenylation 1; it reads LDQAEKFPDR…LGRMNAEQVK (427 aa). The 83-residue stretch at 751 to 833 folds into the Carrier 1 domain; it reads ANEDPVTQAL…DLIPLLSDTT (83 aa). Serine 788 bears the O-(pantetheine 4'-phosphoryl)serine mark. The condensation 1 stretch occupies residues 879 to 1317; sequence QKIFPTTATQ…HSLMREPETT (439 aa). The adenylation 2 stretch occupies residues 1358 to 1781; sequence FENKAATEPE…IGRRDDLVKL (424 aa). One can recognise a Carrier 2 domain in the interval 1929 to 2005; it reads GEDGDLQCQV…MLIRGLATKT (77 aa). Serine 1966 bears the O-(pantetheine 4'-phosphoryl)serine mark. Residues 2048–2503 are condensation 2; sequence IPCSTLQEGM…LLDQVVSLLT (456 aa). The adenylation 3 stretch occupies residues 2573–2977; it reads AGTPETACIN…LGRRDEQEKI (405 aa). The Carrier 3 domain occupies 3122–3198; the sequence is RPLSSLEREI…DIAAELSDSK (77 aa). Position 3159 is an O-(pantetheine 4'-phosphoryl)serine (serine 3159). Residues 3232 to 3621 are condensation 3; it reads KVLPCLPSQE…RDRDELRISA (390 aa). The region spanning 3685-3760 is the Carrier 4 domain; sequence TAAEEQIRDL…GLSKLLDQRQ (76 aa). Serine 3720 carries the O-(pantetheine 4'-phosphoryl)serine modification. A condensation 4 region spans residues 3779-4199; that stretch reads RYKATPLQAG…GVQIKAGASD (421 aa). One can recognise a Carrier 5 domain in the interval 4264–4340; that stretch reads SLSTAEQDIV…RLTVATETRS (77 aa). O-(pantetheine 4'-phosphoryl)serine is present on serine 4301. Residues 4381 to 4708 form a condensation 5 region; it reads VLPLLTGQQQ…DLVSRAEHQQ (328 aa).

Belongs to the NRP synthetase family.

Its pathway is siderophore biosynthesis. Its function is as follows. Nonribosomal peptide synthetase; part of the gene cluster that mediates the biosynthesis of siderophore ferrichrome A which is contributing to organismal virulence. The first step of ferrichrome A biosynthesis is performed by the HMG-CoA synthase hcs1 which catalyzes the generation of HMG-CoA and CoA using acetoacetyl-CoA and acetyl-CoA as substrates. The enoyl-CoA isomerase/hydratase fer4 then catalyzes the conversion of hcs1-produced HMG-CoA to methylglutaconyl-CoA. The acyltransferase fer5 then fuses the fer4-generated methylglutaconyl-CoA with sid1-generated hydroxyornithine to yield methylglutaconyl hydroxyornithine. Methylglutaconyl hydroxyornithine is then available for use by the NRPS fer3 to generate ferrichrome A. This chain is Siderophore peptide synthetase fer3, found in Mycosarcoma maydis (Corn smut fungus).